We begin with the raw amino-acid sequence, 539 residues long: D-mannonate oxidoreductase (539 aa).

39–50 contributes to the NAD(+) binding site; it reads WVHFGGGNIFRG.

This sequence belongs to the mannitol dehydrogenase family. UxuB subfamily.

The enzyme catalyses D-mannonate + NAD(+) = keto-D-fructuronate + NADH + H(+). Its pathway is carbohydrate metabolism. In terms of biological role, catalyzes the reduction of D-fructuronate (D-FruA) to D-mannonate (D-ManA). The polypeptide is D-mannonate oxidoreductase (Thermotoga maritima (strain ATCC 43589 / DSM 3109 / JCM 10099 / NBRC 100826 / MSB8)).